The chain runs to 313 residues: MPWKEESEFTKQDKAARVIQQAWKSFLNVAIFQHFKSLIDLRRQGEPRQIVKYINPKEAELLDAAAGIHVRFRLGGVKFPPDIYYKIFTHRPIEDLCANSPRNYAKLPAKHTSHNKNDHLQEEDHSGWYHRIENNGWRPVSDTFWLSTDGMVVEDKKESEFHFSKLKRRQDLEKKRKLRKIEWMRQMYYSGSLEAKSTHHETLGLIHTATKGLIRAFEDGGIDSVMEWEVDEVLNWTNTLNFDEYIASWKEIATSNSSANFKGFRFNQAQKNIYNYGGDISKMQMGIPDDTYYENVYQEPNVTRLTPDSTYGL.

In terms of assembly, can homodimerize. Interacts with MFF; the interaction inhibits MFF interaction with DNM1L. Enriched in the pancreatic beta cell and the testis and is expressed at low levels in other tissues tested.

The protein resides in the cytoplasm. It is found in the cytosol. Its subcellular location is the mitochondrion outer membrane. Functionally, acts as an inhibitor of mitochondrial fission. Interacts with MFF and prevents DNM1L recruitment to mitochondria, promoting a more fused mitochondrial network. The protein is Protein MFI of Homo sapiens (Human).